Consider the following 212-residue polypeptide: MAHNKSKIPRATLKRLPLYYRFVNTLKSKGIDRVNSKAISEALNIESATIRRDFSYFGELGKKGYGYNIDSLLEFFKTALSDSDNIHIALVGVGNLGRALLTYNFSIHDEMTITEAFDIDEQIVGTEIGDVSVHHMNDLKKVLNAQNINVVILTTPEEAAQRVANQLVEADIQGILNFTPARIEVPNTVQVHHIDLGIELQSLLFFMKNYSN.

The segment at residues 18–57 (LYYRFVNTLKSKGIDRVNSKAISEALNIESATIRRDFSYF) is a DNA-binding region (H-T-H motif). 92 to 97 (GVGNLG) provides a ligand contact to NAD(+).

It belongs to the transcriptional regulatory Rex family. Homodimer.

The protein resides in the cytoplasm. In terms of biological role, modulates transcription in response to changes in cellular NADH/NAD(+) redox state. The polypeptide is Redox-sensing transcriptional repressor Rex (Staphylococcus haemolyticus (strain JCSC1435)).